We begin with the raw amino-acid sequence, 100 residues long: MGVYKFCYNKKKEVGQVAVLQKERLIFYIVTKEKSYLKPTLANFSNAIDSLYNECLLRKCCKLAIPKIGCCLDRLYWKTVKNIIIDKLCKKGIEVVVYYI.

This is an uncharacterized protein from Acheta domesticus (House cricket).